Reading from the N-terminus, the 204-residue chain is Cold and drought-regulated protein CORA (204 aa).

Tandem repeats lie at residues 54–59 (YNHGGG), 65–70 (YNHGGG), 71–76 (YNHGGG), 78–83 (YHNGGG), 85–90 (YNHGGG), 98–100 (HGG), 101–103 (HGG), 112–114 (HGG), 115–117 (HGG), 126–128 (HGG), 129–131 (HGG), 164–169 (YNHGGG), 171–176 (YNHGGG), 178–180 (HGG), 181–183 (HGG), 184–186 (HGG), 187–189 (HGG), and 190–192 (HGG). The segment at 54–176 (YNHGGGYNGG…GGGGYNHGGG (123 aa)) is 7 X 6 AA repeats of Y-N-H-G-G-G. The 11 X 3 AA repeats of H-G-G stretch occupies residues 98-192 (HGGHGGGGYN…GHGGHGGHGG (95 aa)). Over residues 169–194 (GGYNHGGGGHGGHGGHGGHGGHGGHG) the composition is skewed to gly residues. Residues 169–204 (GGYNHGGGGHGGHGGHGGHGGHGGHGAVQTEDNTQN) are disordered.

Belongs to the GRP family.

In terms of biological role, may be involved in resistance of the plant to environmental stress. This chain is Cold and drought-regulated protein CORA (CORA), found in Medicago sativa (Alfalfa).